The following is a 668-amino-acid chain: Fructose-1,6-bisphosphatase class 3 (668 aa).

The protein belongs to the FBPase class 3 family. Mn(2+) is required as a cofactor.

It catalyses the reaction beta-D-fructose 1,6-bisphosphate + H2O = beta-D-fructose 6-phosphate + phosphate. It participates in carbohydrate biosynthesis; gluconeogenesis. The sequence is that of Fructose-1,6-bisphosphatase class 3 from Clostridium botulinum (strain Langeland / NCTC 10281 / Type F).